The following is a 296-amino-acid chain: 1,2-beta-oligomannan phosphorylase (296 aa).

The protein belongs to the glycosyl hydrolase 130 family. As to quaternary structure, homodimer.

It catalyses the reaction [(1-&gt;2)-beta-D-mannosyl](n) + phosphate = [(1-&gt;2)-beta-D-mannosyl](n-1) + alpha-D-mannose 1-phosphate. It functions in the pathway nucleotide-sugar biosynthesis; GDP-alpha-D-mannose biosynthesis. Functionally, probably involved in a salvage pathway for GDP-D-mannose biosynthesis. Catalyzes the reversible phosphorolysis of 1,2-beta-oligomannan. In phosphorolytic reactions, prefers 1,2-beta-oligomannan with a degree of polymerization (DP) of 3, 4 and 5. Produces alpha-D-mannose 1-phosphate, which is the precursor of GDP-D-mannose. This is 1,2-beta-oligomannan phosphorylase from Thermoanaerobacter sp. (strain X514).